A 476-amino-acid polypeptide reads, in one-letter code: Calcium/calmodulin-dependent protein kinase type 1G (476 aa).

The Protein kinase domain occupies 23 to 277; sequence FIFMEVLGSG…CEKALSHPWI (255 aa). Residues 29–37 and Lys-52 contribute to the ATP site; that span reads LGSGAFSEV. The active-site Proton acceptor is Asp-143. Residues 277-317 form an autoinhibitory domain region; it reads IDGNTALHRDIYPSVSLQIQKNFAKSKWRQAFNAAAVVHHM. Positions 297-318 are calmodulin-binding; it reads KNFAKSKWRQAFNAAAVVHHMR. The disordered stretch occupies residues 325–352; it reads HSPGVRPEVENRPPETQASETSRPSSPE. Polar residues predominate over residues 338–352; that stretch reads PETQASETSRPSSPE.

It belongs to the protein kinase superfamily. CAMK Ser/Thr protein kinase family. CaMK subfamily. Post-translationally, may be prenylated on Cys-473. In terms of tissue distribution, mainly expressed in brain with small amounts in skeletal muscles, kidney, spleen and liver. Strongly expressed in forebrain neocortex, striatum and limbic system.

It is found in the cytoplasm. Its subcellular location is the golgi apparatus membrane. The protein resides in the cell membrane. It carries out the reaction L-seryl-[protein] + ATP = O-phospho-L-seryl-[protein] + ADP + H(+). The catalysed reaction is L-threonyl-[protein] + ATP = O-phospho-L-threonyl-[protein] + ADP + H(+). Activated by Ca(2+)/calmodulin. Binding of calmodulin is thought to result in a conformational change and leads to activation through phosphorylation by CAMKK1. Calcium/calmodulin-dependent protein kinase belonging to a proposed calcium-triggered signaling cascade. In vitro phosphorylates transcription factor CREB1. This is Calcium/calmodulin-dependent protein kinase type 1G (CAMK1G) from Homo sapiens (Human).